The primary structure comprises 1562 residues: Phospholipid-transporting ATPase dnf1 (1562 aa).

4 disordered regions span residues 1 to 38, 55 to 94, 115 to 134, and 146 to 166; these read MKSS…ADDG, LPLG…SDSR, TPST…KKAH, and PLDD…NGRP. Residues 1 to 275 lie on the Extracellular side of the membrane; sequence MKSSGIAGDS…IAIMQMIPGW (275 aa). Residues 12–21 are compositionally biased toward polar residues; the sequence is GFETNFLNET. Residues 60-69 are compositionally biased toward acidic residues; sequence DENELDEIDI. Positions 71–86 are enriched in basic and acidic residues; sequence GDSKKLDSVEVDESHD. Residues 276 to 296 form a helical membrane-spanning segment; sequence STTGTYTTIIPLLIFISIAIL. The Cytoplasmic segment spans residues 297-574; that stretch reads REGFDNYRRY…APSMQKVTNR (278 aa). A disordered region spans residues 347–406; that stretch reads SQESASRSTIRSTDEREPERTSEDPPQLPPSPSSPSSPALSVKPNIDPQPPLYNSTLTTT. Over residues 358 to 369 the composition is skewed to basic and acidic residues; the sequence is STDEREPERTSE. Residues 372 to 381 are compositionally biased toward pro residues; the sequence is PQLPPSPSSP. A helical transmembrane segment spans residues 575–595; that stretch reads IVIFIFALVVSMAIYCTAAYF. At 596-614 the chain is on the extracellular side; the sequence is VWQKKVERKLWYLTNSKLS. A helical transmembrane segment spans residues 615-635; that stretch reads FVPILVSFIILYNTMVPISLY. Topologically, residues 636-1309 are cytoplasmic; that stretch reads VSMEIIRVFQ…YILGTFYKEQ (674 aa). The 4-aspartylphosphate intermediate role is filled by aspartate 684. 8 residues coordinate ATP: aspartate 684, lysine 685, threonine 686, glutamate 794, phenylalanine 843, serine 845, lysine 848, and lysine 866. Aspartate 684 lines the Mg(2+) pocket. Residue threonine 686 participates in Mg(2+) binding. Position 954 is a phosphoserine (serine 954). ATP contacts are provided by residues arginine 1022, threonine 1023, threonine 1102, glycine 1103, aspartate 1104, 1181–1188, arginine 1216, and lysine 1222; that span reads VIVIDGST. Aspartate 1243 is a binding site for Mg(2+). ATP contacts are provided by asparagine 1246 and aspartate 1247. The helical transmembrane segment at 1310–1330 threads the bilayer; that stretch reads FFFLMQAIMQPFVGYTGQSLY. At 1331–1332 the chain is on the extracellular side; the sequence is ES. The chain crosses the membrane as a helical span at residues 1333–1353; sequence WGLTCFNTLFSSLCVIGLGIF. Residues 1354–1381 lie on the Cytoplasmic side of the membrane; the sequence is EKDLSASTVIAVPELYQKGINNEAFNWR. A helical membrane pass occupies residues 1382-1402; sequence VYFGWCSIAFIQAFLVFYVTY. Residues 1403–1414 are Extracellular-facing; sequence SLFGMKELNDNN. A helical membrane pass occupies residues 1415-1435; the sequence is IFAYGQLIFTAAIFIMNFKLV. At 1436–1443 the chain is on the cytoplasmic side; that stretch reads FIEMQYIN. A helical transmembrane segment spans residues 1444–1464; sequence IISIIVLVLTSLAWFLFNIFI. The Extracellular portion of the chain corresponds to 1465–1490; the sequence is SEHYPDKNLYLARSQFLHHFGKNPSW. Residues 1491 to 1511 form a helical membrane-spanning segment; sequence WLTMLFVMVCALTIDIVAQML. The Cytoplasmic portion of the chain corresponds to 1512 to 1562; it reads RRTLRPTDTDIFVEMENDAFVRSRFEQESGEFLQANAPSVDEIEQYLKSRD.

The protein belongs to the cation transport ATPase (P-type) (TC 3.A.3) family. Type IV subfamily. It depends on Mg(2+) as a cofactor.

It localises to the golgi apparatus. It is found in the trans-Golgi network membrane. The protein resides in the endosome membrane. The enzyme catalyses ATP + H2O + phospholipidSide 1 = ADP + phosphate + phospholipidSide 2.. It carries out the reaction a 1,2-diacyl-sn-glycero-3-phosphocholine(out) + ATP + H2O = a 1,2-diacyl-sn-glycero-3-phosphocholine(in) + ADP + phosphate + H(+). The catalysed reaction is a 1,2-diacyl-sn-glycero-3-phosphoethanolamine(out) + ATP + H2O = a 1,2-diacyl-sn-glycero-3-phosphoethanolamine(in) + ADP + phosphate + H(+). Functionally, catalytic component of a P4-ATPase flippase complex which catalyzes the hydrolysis of ATP coupled to the transport of phosphatidylcholine and small amounts of phosphatidylethanolamine from the lumen to the cytosolic leaflet of the trans-Golgi network and ensures the maintenance of asymmetric distribution of phospholipids. May be involved in transport from early endosomes to the trans-Golgi network (TGN). The protein is Phospholipid-transporting ATPase dnf1 of Schizosaccharomyces pombe (strain 972 / ATCC 24843) (Fission yeast).